Consider the following 329-residue polypeptide: D-alanine--D-alanine ligase (329 aa).

The 207-residue stretch at 120 to 326 (KLWYDALDIP…FHEFLEDCIN (207 aa)) folds into the ATP-grasp domain. Residue 150-205 (AFEKWGKVFVKAARQGSSVGCYSVAEKQAIAKAVNDAFGYSDQVLVEKAVKPRELE) coordinates ATP. Mg(2+) contacts are provided by Asp-280, Glu-293, and Asn-295.

This sequence belongs to the D-alanine--D-alanine ligase family. Requires Mg(2+) as cofactor. Mn(2+) is required as a cofactor.

The protein resides in the cytoplasm. It catalyses the reaction 2 D-alanine + ATP = D-alanyl-D-alanine + ADP + phosphate + H(+). It functions in the pathway cell wall biogenesis; peptidoglycan biosynthesis. Its function is as follows. Cell wall formation. This is D-alanine--D-alanine ligase from Vibrio parahaemolyticus serotype O3:K6 (strain RIMD 2210633).